The following is a 243-amino-acid chain: Cell division protein ZipA (243 aa).

The Periplasmic segment spans residues 1 to 4 (MSDM). Residues 5 to 25 (AMIRIGILIAGLLLVAAIFLF) form a helical membrane-spanning segment. Residues 26–243 (GRPKKSPQGR…APPLTKSPRW (218 aa)) lie on the Cytoplasmic side of the membrane. The interval 30 to 89 (KSPQGRRVDKDEGQPRERREPVISSEFGVEDDAAERAEGVEQSELNLEGQDASGGNEVGK) is disordered. The span at 35-50 (RRVDKDEGQPRERREP) shows a compositional bias: basic and acidic residues.

Belongs to the ZipA family. As to quaternary structure, interacts with FtsZ via their C-terminal domains.

It localises to the cell inner membrane. Functionally, essential cell division protein that stabilizes the FtsZ protofilaments by cross-linking them and that serves as a cytoplasmic membrane anchor for the Z ring. Also required for the recruitment to the septal ring of downstream cell division proteins. In Xanthomonas euvesicatoria pv. vesicatoria (strain 85-10) (Xanthomonas campestris pv. vesicatoria), this protein is Cell division protein ZipA.